Reading from the N-terminus, the 577-residue chain is Aspartate--tRNA(Asp/Asn) ligase (577 aa).

Residue Glu-171 participates in L-aspartate binding. The segment at 195 to 198 (QLFK) is aspartate. Residue Arg-217 participates in L-aspartate binding. Residues 217–219 (RDE) and Gln-226 each bind ATP. His-444 is a binding site for L-aspartate. Glu-474 is an ATP binding site. L-aspartate is bound at residue Arg-481. 526 to 529 (GFDR) contributes to the ATP binding site.

Belongs to the class-II aminoacyl-tRNA synthetase family. Type 1 subfamily. In terms of assembly, homodimer.

The protein resides in the cytoplasm. It carries out the reaction tRNA(Asx) + L-aspartate + ATP = L-aspartyl-tRNA(Asx) + AMP + diphosphate. In terms of biological role, aspartyl-tRNA synthetase with relaxed tRNA specificity since it is able to aspartylate not only its cognate tRNA(Asp) but also tRNA(Asn). Reaction proceeds in two steps: L-aspartate is first activated by ATP to form Asp-AMP and then transferred to the acceptor end of tRNA(Asp/Asn). This Helicobacter pylori (strain HPAG1) protein is Aspartate--tRNA(Asp/Asn) ligase.